We begin with the raw amino-acid sequence, 130 residues long: Ribonuclease VapC4 (130 aa).

In terms of domain architecture, PINc spans 7 to 130 (LADTSVFIGI…AMPDVEVITI (124 aa)). Aspartate 9 and aspartate 98 together coordinate Mg(2+).

This sequence belongs to the PINc/VapC protein family. In terms of assembly, interacts with cognate antitoxin VapB4. Requires Mg(2+) as cofactor.

The protein localises to the secreted. Its function is as follows. Toxic component of a type II toxin-antitoxin (TA) system. Probably exerts its toxic effect by binding to mRNA, inhibiting translation. Binds to, recognizes and cleaves ssRNA at ACGC and AC(A/U)GC sequences, usually between the G and C; cleavage is not very efficient, nor is cleavage required to inhibit protein synthesis. Upon expression in situ, in M.smegmatis or E.coli inhibits cell growth and colony formation; in at least E.coli also causes increased levels of cellular RNA. Its toxic effect is neutralized by coexpression with cognate antitoxin VapB4. The protein is Ribonuclease VapC4 of Mycobacterium tuberculosis (strain ATCC 25618 / H37Rv).